A 1557-amino-acid chain; its full sequence is DVA-1 polyprotein (1557 aa).

The signal sequence occupies residues 1–21 (MKSTSFITLLLLSYFIVEAHS). Positions 22–60 (SIFHWDDERLFKHDDTHSWLTDVQKAELETLKHQPIQLR) are excised as a propeptide. Residue Asn997 is glycosylated (N-linked (GlcNAc...) asparagine).

Belongs to the NPA family. Nematode polyprotein allergens (NPAs) are synthesized as large polypeptides that are subsequently proteolytically cleaved to active polypeptide units.

Its function is as follows. Has high binding affinity for fatty acids and retinoids. The sequence is that of DVA-1 polyprotein (DVA-1) from Dictyocaulus viviparus (Bovine lungworm).